The chain runs to 198 residues: Tumor necrosis factor receptor superfamily member 22 (198 aa).

Topologically, residues 1–20 are cytoplasmic; it reads MFGFFCSLVSSLSRWFLWRR. The helical; Signal-anchor for type II membrane protein transmembrane segment at 21–41 threads the bilayer; sequence LLLLLLLLLLNLPLQVKFAML. At 42 to 198 the chain is on the extracellular side; the sequence is ELHSFKCPAG…SVVVFRIIRR (157 aa). TNFR-Cys repeat units lie at residues 47–82, 84–124, and 125–165; these read KCPAGEYWSKDVCCKNCSAGTFVKAPCEIPHTQGQC, KCHP…DRKC, and QCRT…NTVC. 9 disulfide bridges follow: Cys48–Cys59, Cys60–Cys73, Cys63–Cys82, Cys85–Cys100, Cys103–Cys116, Cys106–Cys124, Cys126–Cys141, Cys144–Cys157, and Cys147–Cys165. A glycan (N-linked (GlcNAc...) asparagine) is linked at Asn62. An N-linked (GlcNAc...) asparagine glycan is attached at Asn158.

In terms of tissue distribution, ubiquitous.

It localises to the cell membrane. The protein localises to the secreted. Receptor for the cytotoxic ligand TNFSF10/TRAIL. Lacks a cytoplasmic death domain and hence is not capable of inducing apoptosis. Protects cells against TRAIL mediated apoptosis possibly through ligand competition. Cannot induce the NF-kappa-B pathway. The polypeptide is Tumor necrosis factor receptor superfamily member 22 (Tnfrsf22) (Mus musculus (Mouse)).